Reading from the N-terminus, the 965-residue chain is Glycine dehydrogenase (decarboxylating) (965 aa).

An N6-(pyridoxal phosphate)lysine modification is found at lysine 711.

Belongs to the GcvP family. The glycine cleavage system is composed of four proteins: P, T, L and H. The cofactor is pyridoxal 5'-phosphate.

It carries out the reaction N(6)-[(R)-lipoyl]-L-lysyl-[glycine-cleavage complex H protein] + glycine + H(+) = N(6)-[(R)-S(8)-aminomethyldihydrolipoyl]-L-lysyl-[glycine-cleavage complex H protein] + CO2. Functionally, the glycine cleavage system catalyzes the degradation of glycine. The P protein binds the alpha-amino group of glycine through its pyridoxal phosphate cofactor; CO(2) is released and the remaining methylamine moiety is then transferred to the lipoamide cofactor of the H protein. The chain is Glycine dehydrogenase (decarboxylating) from Psychrobacter arcticus (strain DSM 17307 / VKM B-2377 / 273-4).